The following is a 129-amino-acid chain: Aldose 1-epimerase (129 aa).

This sequence belongs to the aldose epimerase family.

It catalyses the reaction alpha-D-glucose = beta-D-glucose. It participates in carbohydrate metabolism; hexose metabolism. In terms of biological role, mutarotase converts alpha-aldose to the beta-anomer. It is active on D-glucose, L-arabinose, D-xylose, D-galactose, maltose and lactose. In Lactobacillus helveticus (Lactobacillus suntoryeus), this protein is Aldose 1-epimerase (galM).